A 92-amino-acid chain; its full sequence is Secreted RxLR effector protein 21 (92 aa).

Residues 1–21 (MNLSTLLLTLACISQLHGGSA) form the signal peptide. The short motif at 30–33 (RQLR) is the RxLR element.

This sequence belongs to the RxLR effector family.

It localises to the secreted. Its subcellular location is the host nucleus. The protein localises to the host cytoplasm. Secreted effector that completely suppresses the host cell death induced by cell death-inducing proteins. The sequence is that of Secreted RxLR effector protein 21 from Plasmopara viticola (Downy mildew of grapevine).